The sequence spans 592 residues: Arginine--tRNA ligase (592 aa).

The short motif at 112 to 122 is the 'HIGH' region element; sequence VNPNKELHVGH.

The protein belongs to the class-I aminoacyl-tRNA synthetase family. In terms of assembly, monomer.

It localises to the cytoplasm. The catalysed reaction is tRNA(Arg) + L-arginine + ATP = L-arginyl-tRNA(Arg) + AMP + diphosphate. This chain is Arginine--tRNA ligase, found in Thermus thermophilus (strain ATCC BAA-163 / DSM 7039 / HB27).